Here is a 273-residue protein sequence, read N- to C-terminus: 4-hydroxy-tetrahydrodipicolinate reductase (273 aa).

Residues 12–17 (GAGGRM) and glutamate 38 contribute to the NAD(+) site. Position 39 (arginine 39) interacts with NADP(+). NAD(+)-binding positions include 102–104 (GTT) and 126–129 (AANF). The active-site Proton donor/acceptor is histidine 159. Histidine 160 lines the (S)-2,3,4,5-tetrahydrodipicolinate pocket. Lysine 163 functions as the Proton donor in the catalytic mechanism. 169-170 (GT) provides a ligand contact to (S)-2,3,4,5-tetrahydrodipicolinate.

It belongs to the DapB family. In terms of assembly, homotetramer.

The protein resides in the cytoplasm. It carries out the reaction (S)-2,3,4,5-tetrahydrodipicolinate + NAD(+) + H2O = (2S,4S)-4-hydroxy-2,3,4,5-tetrahydrodipicolinate + NADH + H(+). The enzyme catalyses (S)-2,3,4,5-tetrahydrodipicolinate + NADP(+) + H2O = (2S,4S)-4-hydroxy-2,3,4,5-tetrahydrodipicolinate + NADPH + H(+). It participates in amino-acid biosynthesis; L-lysine biosynthesis via DAP pathway; (S)-tetrahydrodipicolinate from L-aspartate: step 4/4. Catalyzes the conversion of 4-hydroxy-tetrahydrodipicolinate (HTPA) to tetrahydrodipicolinate. The chain is 4-hydroxy-tetrahydrodipicolinate reductase from Escherichia fergusonii (strain ATCC 35469 / DSM 13698 / CCUG 18766 / IAM 14443 / JCM 21226 / LMG 7866 / NBRC 102419 / NCTC 12128 / CDC 0568-73).